We begin with the raw amino-acid sequence, 374 residues long: tRNA-specific 2-thiouridylase MnmA (374 aa).

Residues 16–23 (GMSGGVDS) and Met-42 contribute to the ATP site. Residues 102-104 (NPD) form an interaction with target base in tRNA region. The active-site Nucleophile is Cys-107. A disulfide bridge connects residues Cys-107 and Cys-203. Position 131 (Gly-131) interacts with ATP. The segment at 153-155 (KDQ) is interaction with tRNA. The active-site Cysteine persulfide intermediate is the Cys-203. The interaction with tRNA stretch occupies residues 311-312 (RY).

It belongs to the MnmA/TRMU family.

The protein localises to the cytoplasm. It carries out the reaction S-sulfanyl-L-cysteinyl-[protein] + uridine(34) in tRNA + AH2 + ATP = 2-thiouridine(34) in tRNA + L-cysteinyl-[protein] + A + AMP + diphosphate + H(+). In terms of biological role, catalyzes the 2-thiolation of uridine at the wobble position (U34) of tRNA, leading to the formation of s(2)U34. In Exiguobacterium sibiricum (strain DSM 17290 / CCUG 55495 / CIP 109462 / JCM 13490 / 255-15), this protein is tRNA-specific 2-thiouridylase MnmA.